The primary structure comprises 172 residues: Large ribosomal subunit protein uL10 (172 aa).

The protein belongs to the universal ribosomal protein uL10 family. Part of the ribosomal stalk of the 50S ribosomal subunit. The N-terminus interacts with L11 and the large rRNA to form the base of the stalk. The C-terminus forms an elongated spine to which L12 dimers bind in a sequential fashion forming a multimeric L10(L12)X complex.

Forms part of the ribosomal stalk, playing a central role in the interaction of the ribosome with GTP-bound translation factors. This Francisella tularensis subsp. tularensis (strain FSC 198) protein is Large ribosomal subunit protein uL10.